Here is a 369-residue protein sequence, read N- to C-terminus: MAFAGLKKQINKANQYMTEKMGGAEGTKLDMDFMEMERKTDVTVELVEELQLKTKEFLQPNPTARAKMAAVKGISKLSGQAKSNTYPQPEGLLAECMLTYGKKLGEDNSVFAQALVEFGEALKQMADVKYSLDDNIKQNFLEPLHHMQTKDLKEVMHHRKKLQGRRLDFDCKRRRQAKDDEIRGAEDKFGESLQLAQVGMFNLLENDTEHVSQLVTFAEALYDFHSQCADVLRGLQETLQEKRSEAESRPRNEFVPKTLLDLNLDGGGGGLNEDGTPSHISSSASPLPSPMRSPAKSMAVTPQRQQQPCCQALYDFEPENPGELAFKENDIITLLNRVDDNWFEGAVNGRTGYFPQSYVQVQVPLPNGN.

In terms of domain architecture, BAR spans 18–248 (TEKMGGAEGT…LQEKRSEAES (231 aa)). Residues 227 to 247 (QCADVLRGLQETLQEKRSEAE) are a coiled coil. A disordered region spans residues 266-295 (GGGGGLNEDGTPSHISSSASPLPSPMRSPA). Residues 277-294 (PSHISSSASPLPSPMRSP) show a composition bias toward low complexity. The SH3 domain maps to 305–364 (QQQPCCQALYDFEPENPGELAFKENDIITLLNRVDDNWFEGAVNGRTGYFPQSYVQVQVP).

This sequence belongs to the endophilin family.

It is found in the cytoplasm. It localises to the membrane. In terms of biological role, required presynaptically at the neuromuscular junction. Implicated in synaptic vesicle endocytosis. The polypeptide is Endophilin-A (Drosophila erecta (Fruit fly)).